We begin with the raw amino-acid sequence, 206 residues long: 7-methyl-GTP pyrophosphatase (206 aa).

The active-site Proton acceptor is the Asp-82.

This sequence belongs to the Maf family. YceF subfamily. A divalent metal cation is required as a cofactor.

Its subcellular location is the cytoplasm. The enzyme catalyses N(7)-methyl-GTP + H2O = N(7)-methyl-GMP + diphosphate + H(+). Its function is as follows. Nucleoside triphosphate pyrophosphatase that hydrolyzes 7-methyl-GTP (m(7)GTP). May have a dual role in cell division arrest and in preventing the incorporation of modified nucleotides into cellular nucleic acids. This is 7-methyl-GTP pyrophosphatase from Shewanella denitrificans (strain OS217 / ATCC BAA-1090 / DSM 15013).